The primary structure comprises 89 residues: Small ribosomal subunit protein uS15 (89 aa).

This sequence belongs to the universal ribosomal protein uS15 family. In terms of assembly, part of the 30S ribosomal subunit. Forms a bridge to the 50S subunit in the 70S ribosome, contacting the 23S rRNA.

In terms of biological role, one of the primary rRNA binding proteins, it binds directly to 16S rRNA where it helps nucleate assembly of the platform of the 30S subunit by binding and bridging several RNA helices of the 16S rRNA. Functionally, forms an intersubunit bridge (bridge B4) with the 23S rRNA of the 50S subunit in the ribosome. The polypeptide is Small ribosomal subunit protein uS15 (Azoarcus sp. (strain BH72)).